A 607-amino-acid polypeptide reads, in one-letter code: Elongation factor 4 (607 aa).

The region spanning 11 to 193 (ENIRNFSIIA…KIVDVVPAPD (183 aa)) is the tr-type G domain. GTP contacts are provided by residues 23–28 (DHGKST) and 140–143 (NKID).

The protein belongs to the TRAFAC class translation factor GTPase superfamily. Classic translation factor GTPase family. LepA subfamily.

The protein resides in the cell membrane. The catalysed reaction is GTP + H2O = GDP + phosphate + H(+). Required for accurate and efficient protein synthesis under certain stress conditions. May act as a fidelity factor of the translation reaction, by catalyzing a one-codon backward translocation of tRNAs on improperly translocated ribosomes. Back-translocation proceeds from a post-translocation (POST) complex to a pre-translocation (PRE) complex, thus giving elongation factor G a second chance to translocate the tRNAs correctly. Binds to ribosomes in a GTP-dependent manner. The chain is Elongation factor 4 from Staphylococcus epidermidis (strain ATCC 35984 / DSM 28319 / BCRC 17069 / CCUG 31568 / BM 3577 / RP62A).